The chain runs to 488 residues: Cysteine--tRNA ligase (488 aa).

Cys29 is a Zn(2+) binding site. The short motif at 31–41 is the 'HIGH' region element; it reads ATVQGMPHVGH. Cys227, His252, and Glu256 together coordinate Zn(2+). The 'KMSKS' region signature appears at 283 to 287; the sequence is KMSKS. Lys286 is an ATP binding site.

The protein belongs to the class-I aminoacyl-tRNA synthetase family. In terms of assembly, monomer. The cofactor is Zn(2+).

It localises to the cytoplasm. The catalysed reaction is tRNA(Cys) + L-cysteine + ATP = L-cysteinyl-tRNA(Cys) + AMP + diphosphate. The chain is Cysteine--tRNA ligase from Pseudarthrobacter chlorophenolicus (strain ATCC 700700 / DSM 12829 / CIP 107037 / JCM 12360 / KCTC 9906 / NCIMB 13794 / A6) (Arthrobacter chlorophenolicus).